The primary structure comprises 197 residues: Recombination protein RecR (197 aa).

Residues 57-72 form a C4-type zinc finger; it reads CSVCFAITEDDPCWIC. The Toprim domain occupies 79 to 174; sequence GTICVVEEPQ…KVTRLAHGIP (96 aa).

This sequence belongs to the RecR family.

Its function is as follows. May play a role in DNA repair. It seems to be involved in an RecBC-independent recombinational process of DNA repair. It may act with RecF and RecO. The polypeptide is Recombination protein RecR (Citrifermentans bemidjiense (strain ATCC BAA-1014 / DSM 16622 / JCM 12645 / Bem) (Geobacter bemidjiensis)).